The following is a 554-amino-acid chain: Hedycaryol synthase (554 aa).

Arg-270, Asp-307, Asp-311, Arg-449, and Asp-452 together coordinate (2E,6E)-farnesyl diphosphate. Mg(2+) contacts are provided by Asp-307 and Asp-311. The DDXXD motif signature appears at 307–311; it reads DDTYD. The Mg(2+) site is built by Asp-452, Ser-456, and Glu-460.

It belongs to the terpene synthase family. It depends on Mg(2+) as a cofactor. In terms of tissue distribution, specifically expressed in flowers.

It catalyses the reaction (2E,6E)-farnesyl diphosphate + H2O = (2E,6E)-hedycaryol + diphosphate. It functions in the pathway secondary metabolite biosynthesis; terpenoid biosynthesis. Functionally, sesquiterpene synthase that catalyzes the formation of sesquiterpenes and sesquiterpenoid alcohols. Converts farnesyl diphosphate (FPP) to hedycaryol. Hedycaryol is likely to be one of the terpenes that attract insects for pollination of Camellia brevistyla. The polypeptide is Hedycaryol synthase (Camellia brevistyla).